We begin with the raw amino-acid sequence, 421 residues long: Testin (421 aa).

The region spanning 92–199 (MILTNPVAAK…GDVKLPCEMD (108 aa)) is the PET domain. The tract at residues 133–164 (EKQPVAGSEGAQYRKKQLAKQLPAHDQDPSKC) is disordered. The segment covering 155–164 (PAHDQDPSKC) has biased composition (basic and acidic residues). LIM zinc-binding domains lie at 234–297 (YSCY…CDSE), 299–359 (PRCA…NHAV), and 362–421 (QGCH…KMMS).

The protein belongs to the prickle / espinas / testin family. In terms of assembly, interacts via LIM domain 1 with ZYX. Interacts (via LIM domain 3) with ENAH and VASP. Interacts with ALKBH4, talin, actin, alpha-actinin, GRIP1 and PXN. Interacts (via LIM domain 2) with ACTL7A (via N-terminus). Heterodimer with ACTL7A; the heterodimer interacts with ENAH to form a heterotrimer.

Its subcellular location is the cytoplasm. The protein localises to the cell junction. The protein resides in the focal adhesion. Functionally, scaffold protein that may play a role in cell adhesion, cell spreading and in the reorganization of the actin cytoskeleton. Plays a role in the regulation of cell proliferation. May act as a tumor suppressor. This chain is Testin (TES), found in Microcebus murinus (Gray mouse lemur).